A 985-amino-acid chain; its full sequence is Disease resistance protein At4g27190 (985 aa).

Residues 24–88 adopt a coiled-coil conformation; that stretch reads ANAIKFKSNV…ISKARLKLEE (65 aa). The 263-residue stretch at 167 to 429 folds into the NB-ARC domain; that stretch reads IGVWGMGGVG…MAEGFMEELG (263 aa). Position 171–178 (171–178) interacts with ATP; it reads GMGGVGKT. LRR repeat units lie at residues 502-523, 526-547, 551-572, 575-597, 598-620, and 621-643; these read SLRR…VEEF, KTSV…GFLQ, TLRI…SLLR, SLHS…ETLA, KLEL…EELK, and RFRH…VVSR.

Belongs to the disease resistance NB-LRR family.

In terms of biological role, disease resistance protein. The sequence is that of Disease resistance protein At4g27190 from Arabidopsis thaliana (Mouse-ear cress).